The primary structure comprises 1170 residues: Chromosome partition protein Smc (1170 aa).

32–39 provides a ligand contact to ATP; the sequence is PNGCGKSN. 3 coiled-coil regions span residues 169 to 215, 245 to 365, and 401 to 508; these read GVSK…AVVA, DRQR…DAAA, and EAAH…TQGK. The SMC hinge domain occupies 520-623; the sequence is ALPRLWKKLH…VADDLAQALA (104 aa). Coiled coils occupy residues 664–944 and 983–1020; these read QEIE…KEKL and ERKV…LQAT.

This sequence belongs to the SMC family. As to quaternary structure, homodimer.

The protein resides in the cytoplasm. Required for chromosome condensation and partitioning. The protein is Chromosome partition protein Smc of Burkholderia pseudomallei (strain 1710b).